A 301-amino-acid polypeptide reads, in one-letter code: tRNA dimethylallyltransferase (301 aa).

Position 2–9 (2–9 (GPTASGKT)) interacts with ATP. Position 4-9 (4-9 (TASGKT)) interacts with substrate. Interaction with substrate tRNA stretches follow at residues 27 to 30 (DSAM) and 151 to 155 (QRIQR).

The protein belongs to the IPP transferase family. As to quaternary structure, monomer. It depends on Mg(2+) as a cofactor.

It catalyses the reaction adenosine(37) in tRNA + dimethylallyl diphosphate = N(6)-dimethylallyladenosine(37) in tRNA + diphosphate. In terms of biological role, catalyzes the transfer of a dimethylallyl group onto the adenine at position 37 in tRNAs that read codons beginning with uridine, leading to the formation of N6-(dimethylallyl)adenosine (i(6)A). The sequence is that of tRNA dimethylallyltransferase from Coxiella burnetii (strain CbuK_Q154) (Coxiella burnetii (strain Q154)).